Here is a 238-residue protein sequence, read N- to C-terminus: Sugar fermentation stimulation protein homolog (238 aa).

This sequence belongs to the SfsA family.

In Haemophilus influenzae (strain PittGG), this protein is Sugar fermentation stimulation protein homolog.